We begin with the raw amino-acid sequence, 692 residues long: Protein arginine N-methyltransferase 7 (692 aa).

2 consecutive SAM-dependent MTase PRMT-type domains span residues 14–359 (ENSW…YSLW) and 368–692 (AKTV…QEKR).

The protein belongs to the class I-like SAM-binding methyltransferase superfamily. Protein arginine N-methyltransferase family. PRMT7 subfamily.

In terms of biological role, essential arginine methyltransferase that can both catalyze the formation of omega-N monomethylarginine (MMA) and symmetrical dimethylarginine (sDMA). Specifically mediates the symmetrical dimethylation of arginine residues in the small nuclear ribonucleoproteins SmD1 and SmD3. In Drosophila persimilis (Fruit fly), this protein is Protein arginine N-methyltransferase 7 (Art7).